The sequence spans 327 residues: Beta-ketoacyl-[acyl-carrier-protein] synthase III (327 aa).

Residues C112 and H253 contribute to the active site. The interval Q254 to R258 is ACP-binding. Residue N283 is part of the active site.

This sequence belongs to the thiolase-like superfamily. FabH family. Homodimer.

The protein localises to the cytoplasm. The catalysed reaction is malonyl-[ACP] + acetyl-CoA + H(+) = 3-oxobutanoyl-[ACP] + CO2 + CoA. It functions in the pathway lipid metabolism; fatty acid biosynthesis. In terms of biological role, catalyzes the condensation reaction of fatty acid synthesis by the addition to an acyl acceptor of two carbons from malonyl-ACP. Catalyzes the first condensation reaction which initiates fatty acid synthesis and may therefore play a role in governing the total rate of fatty acid production. Possesses both acetoacetyl-ACP synthase and acetyl transacylase activities. Its substrate specificity determines the biosynthesis of branched-chain and/or straight-chain of fatty acids. This is Beta-ketoacyl-[acyl-carrier-protein] synthase III from Chlamydia trachomatis serovar A (strain ATCC VR-571B / DSM 19440 / HAR-13).